The chain runs to 304 residues: Small ribosomal subunit protein uS3 (304 aa).

The region spanning Ile-17–Asp-86 is the KH type-2 domain. The tract at residues Leu-216–Glu-304 is disordered.

The protein belongs to the universal ribosomal protein uS3 family. In terms of assembly, part of the 30S ribosomal subunit.

In terms of biological role, binds the lower part of the 30S subunit head. The polypeptide is Small ribosomal subunit protein uS3 (Haloarcula marismortui (strain ATCC 43049 / DSM 3752 / JCM 8966 / VKM B-1809) (Halobacterium marismortui)).